A 352-amino-acid chain; its full sequence is MITKSEALDFLKFNSINPILEKLEDINTRNSSKTITFSKNAFIPVCNWCRNVCGYCTFRAEDFKLLKMEEMKEILIKADVFGCREALFTFGENVDENEKVKEELKKMGYSGILEYLYEISAWCLENTNLLPHTNCGILSYDELKYLREVNASMGLMLENSSERLCSTIAHEKSPGKDPNLRIEMIENAGKLKIPFTTGILIGIGETLEERIDSIFEIKRIHEKYGNIQEVIVQNFRSKPKIPMENYKEPSPVEMFKMIILSKLILEDISIQVPPNLNRETGQLFLMAGIDDWGGVSPLTKDFVNPEAPWPDIEELNSFSKELGFNLKERLPVYEKYIAEEWLDKKILEKIKK.

Residues 35–275 (ITFSKNAFIP…EDISIQVPPN (241 aa)) form the Radical SAM core domain. [4Fe-4S] cluster is bound by residues C49, C53, and C56.

This sequence belongs to the radical SAM superfamily. CofG family. As to quaternary structure, consists of two subunits, CofG and CofH. [4Fe-4S] cluster serves as cofactor.

It carries out the reaction 5-amino-5-(4-hydroxybenzyl)-6-(D-ribitylimino)-5,6-dihydrouracil + S-adenosyl-L-methionine = 7,8-didemethyl-8-hydroxy-5-deazariboflavin + 5'-deoxyadenosine + L-methionine + NH4(+) + H(+). The protein operates within cofactor biosynthesis; coenzyme F0 biosynthesis. In terms of biological role, catalyzes the radical-mediated synthesis of 7,8-didemethyl-8-hydroxy-5-deazariboflavin from 5-amino-5-(4-hydroxybenzyl)-6-(D-ribitylimino)-5,6-dihydrouracil. This Methanococcus maripaludis (strain C6 / ATCC BAA-1332) protein is 7,8-didemethyl-8-hydroxy-5-deazariboflavin synthase.